The following is a 42-amino-acid chain: Photosystem II reaction center protein J (42 aa).

A helical membrane pass occupies residues 10–30 (IPLWLIATVAGILVLTVVGIF).

The protein belongs to the PsbJ family. PSII is composed of 1 copy each of membrane proteins PsbA, PsbB, PsbC, PsbD, PsbE, PsbF, PsbH, PsbI, PsbJ, PsbK, PsbL, PsbM, PsbT, PsbX, PsbY, PsbZ, Psb30/Ycf12, at least 3 peripheral proteins of the oxygen-evolving complex and a large number of cofactors. It forms dimeric complexes.

It localises to the plastid. The protein localises to the chloroplast thylakoid membrane. One of the components of the core complex of photosystem II (PSII). PSII is a light-driven water:plastoquinone oxidoreductase that uses light energy to abstract electrons from H(2)O, generating O(2) and a proton gradient subsequently used for ATP formation. It consists of a core antenna complex that captures photons, and an electron transfer chain that converts photonic excitation into a charge separation. This Chara vulgaris (Common stonewort) protein is Photosystem II reaction center protein J.